A 105-amino-acid chain; its full sequence is Large ribosomal subunit protein uL23 (105 aa).

This sequence belongs to the universal ribosomal protein uL23 family. As to quaternary structure, part of the 50S ribosomal subunit. Contacts protein L29, and trigger factor when it is bound to the ribosome.

In terms of biological role, one of the early assembly proteins it binds 23S rRNA. One of the proteins that surrounds the polypeptide exit tunnel on the outside of the ribosome. Forms the main docking site for trigger factor binding to the ribosome. This chain is Large ribosomal subunit protein uL23, found in Ureaplasma parvum serovar 3 (strain ATCC 27815 / 27 / NCTC 11736).